The primary structure comprises 110 residues: ATP synthase subunit c (110 aa).

The next 3 helical transmembrane spans lie at 4 to 24 (FFVI…VFAA), 37 to 57 (ATAG…AGMG), and 81 to 101 (FIVG…FVLI).

This sequence belongs to the ATPase C chain family. In terms of assembly, F-type ATPases have 2 components, F(1) - the catalytic core - and F(0) - the membrane proton channel. F(1) has five subunits: alpha(3), beta(3), gamma(1), delta(1), epsilon(1). F(0) has three main subunits: a(1), b(2) and c(10-14). The alpha and beta chains form an alternating ring which encloses part of the gamma chain. F(1) is attached to F(0) by a central stalk formed by the gamma and epsilon chains, while a peripheral stalk is formed by the delta and b chains.

The protein resides in the cell inner membrane. In terms of biological role, f(1)F(0) ATP synthase produces ATP from ADP in the presence of a proton or sodium gradient. F-type ATPases consist of two structural domains, F(1) containing the extramembraneous catalytic core and F(0) containing the membrane proton channel, linked together by a central stalk and a peripheral stalk. During catalysis, ATP synthesis in the catalytic domain of F(1) is coupled via a rotary mechanism of the central stalk subunits to proton translocation. Its function is as follows. Key component of the F(0) channel; it plays a direct role in translocation across the membrane. A homomeric c-ring of between 10-14 subunits forms the central stalk rotor element with the F(1) delta and epsilon subunits. The polypeptide is ATP synthase subunit c (Thermodesulfovibrio yellowstonii (strain ATCC 51303 / DSM 11347 / YP87)).